The following is a 239-amino-acid chain: BURP domain-containing protein 6 (239 aa).

A signal peptide spans 1–19; that stretch reads MPGAIRDLINPVSSAASAS. The region spanning 28–239 is the BURP domain; sequence FFLEKDLFPG…PQDDMLWVRN (212 aa).

In terms of tissue distribution, expressed in leaves and shoot.

The protein is BURP domain-containing protein 6 (BURP6) of Oryza sativa subsp. japonica (Rice).